The chain runs to 372 residues: L-selectin (372 aa).

An N-terminal signal peptide occupies residues 1–28; that stretch reads MVFPWRCQSAQRGSWSFLKLWIRTLLCC. A propeptide spanning residues 29-38 is cleaved from the precursor; sequence DLLPHHGTHC. The Extracellular portion of the chain corresponds to 39 to 332; the sequence is WTYHYSERSM…FSKIKEGDYN (294 aa). The C-type lectin domain maps to 55-155; sequence KFCKHNYTDL…ACHKRKAALC (101 aa). Disulfide bonds link C57–C155, C128–C147, C128–C160, C160–C171, C165–C180, C182–C191, C197–C241, C227–C254, C259–C303, and C289–C316. Residues N60 and N104 are each glycosylated (N-linked (GlcNAc...) asparagine). Residues E118, N120, E126, N143, and D144 each coordinate Ca(2+). Residues 156–192 form the EGF-like domain; sequence YTASCQPESCNRHGECVETINNNTCICDPGYYGPQCQ. An N-linked (GlcNAc...) asparagine glycan is attached at N177. Sushi domains follow at residues 195–256 and 257–318; these read IQCE…ICQV and IQCM…ICQK. Residues N226, N246, and N278 are each glycosylated (N-linked (GlcNAc...) asparagine). The helical transmembrane segment at 333–355 threads the bilayer; sequence PLFIPVAVMVTAFSGLAFIIWLA. Residues 356-372 lie on the Cytoplasmic side of the membrane; the sequence is RRLKKGKKSQERMDDPY.

The protein belongs to the selectin/LECAM family. As to quaternary structure, interaction with SELPLG/PSGL1 and PODXL2 is required for promoting recruitment and rolling of leukocytes. This interaction is dependent on the sialyl Lewis X glycan modification of SELPLG and PODXL2, and tyrosine sulfation modifications of SELPLG. Sulfation on 'Tyr-51' of SELPLG is important for L-selectin binding. Post-translationally, N-glycosylated. In terms of tissue distribution, expressed in peripheral blood mononuclear cells (PBMC), spleen and thymus.

The protein localises to the cell membrane. Calcium-dependent lectin that mediates cell adhesion by binding to glycoproteins on neighboring cells. Mediates the adherence of lymphocytes to endothelial cells of high endothelial venules in peripheral lymph nodes. Promotes initial tethering and rolling of leukocytes in endothelia. This is L-selectin (Sell) from Rattus norvegicus (Rat).